We begin with the raw amino-acid sequence, 573 residues long: MFPCLAHRPWQVLCRVYLQQRAPLSQRSSKISKPCFGWQSRGGVHKLWFSFPDFRVTSLTWTQVQNCSTSGSGKDGSPTRPEEPKTTEKAQAAQPAAKGAGSKPQGLTKAESIQVKVRAVLKKREYGLKYTQNNFITAVRAMNEFCLKPSDLEHLRKIRRRSPHDDTEAFTVFLRSDVEAKALEVWGSQEALARERDQRKEVEREYQENIFRNQKLLKEYKDFWGNTKPRSRKRATFLQGPGKVVMVAICINGLNFFFKLLAWVYTGSASMFSEAIHSLADTCNQALLALGISQSVRNPDAIHPYGFSNMRYIASLISGVGIFMMGAGLSWYHGIMGLLHPQPIESLLWAYCILAGSLVSEGATLLVAINEIKKSARTQGLSFYEYVMQSRDPSTNVVLLEDAAAVLGVVLAAGCMGLTSLTGNPYYDSLGSLGVGTLLGTVSAFLIYTNTEALLGRSIQAEHMQKLTEFLENDPAVRAIHDVKATDMGLSKVRFKAEVDFDGRVVTRSYLEKQDIEQILNEIQQVKTPEELENFMLKHGENIIDTLGAEVDRLEKELKQRNPEVRHVDLEIL.

Residues 66–108 (NCSTSGSGKDGSPTRPEEPKTTEKAQAAQPAAKGAGSKPQGLT) are disordered. The segment covering 90-104 (AQAAQPAAKGAGSKP) has biased composition (low complexity). Helical transmembrane passes span 244 to 264 (VVMV…LAWV), 319 to 339 (GVGI…MGLL), 347 to 367 (LLWA…TLLV), 397 to 417 (VVLL…GCMG), and 429 to 449 (SLGS…LIYT). The LXXLL motif signature appears at 467-471 (LTEFL).

Belongs to the cation diffusion facilitator (CDF) transporter (TC 2.A.4) family. SLC30A subfamily.

It is found in the mitochondrion membrane. It localises to the nucleus. The protein localises to the endoplasmic reticulum. The catalysed reaction is Zn(2+)(in) + 2 H(+)(out) = Zn(2+)(out) + 2 H(+)(in). In terms of biological role, mitochondrial proton-coupled zinc ion antiporter mediating the export of zinc from the mitochondria and involved in zinc homeostasis, zinc mobilization as well as mitochondrial morphology and health. In nucleus, may function as a secondary coactivator for nuclear receptors. The sequence is that of Proton-coupled zinc antiporter SLC30A9, mitochondrial (slc30a9) from Danio rerio (Zebrafish).